The primary structure comprises 98 residues: Putative protein adenylyltransferase MJ1217 (98 aa).

Positions 31 to 45 match the GSX(10)DXD motif motif; the sequence is GSYAREEQKETSDID. Mg(2+)-binding residues include D43, D45, and D75.

It belongs to the MntA antitoxin family. Probably forms a complex with cognate toxin MJ1216. Mg(2+) is required as a cofactor.

The catalysed reaction is L-tyrosyl-[protein] + ATP = O-(5'-adenylyl)-L-tyrosyl-[protein] + diphosphate. The enzyme catalyses O-(5'-adenylyl)-L-tyrosyl-[protein] + ATP = O-[5'-(adenylyl-(5'-&gt;3')-adenylyl)]-L-tyrosyl-[protein] + diphosphate. Its function is as follows. Probable antitoxin component of a putative type VII toxin-antitoxin (TA) system. Neutralizes cognate toxic MJ1216 by di-AMPylation. The sequence is that of Putative protein adenylyltransferase MJ1217 from Methanocaldococcus jannaschii (strain ATCC 43067 / DSM 2661 / JAL-1 / JCM 10045 / NBRC 100440) (Methanococcus jannaschii).